The sequence spans 341 residues: Tubulin-specific chaperone C (341 aa).

Met1 bears the N-acetylmethionine mark. Residues 34–49 (ERQIEVERRKQKRQDQ) show a composition bias toward basic and acidic residues. The interval 34–55 (ERQIEVERRKQKRQDQEVEEEK) is disordered. Ser79 carries the phosphoserine modification. Residues 148-173 (TAQVDAAPVTSAAPSPPVTKEEEGAP) form a disordered region. Residues 163–318 (PPVTKEEEGA…NWDQVDDFNW (156 aa)) enclose the C-CAP/cofactor C-like domain.

This sequence belongs to the TBCC family. As to quaternary structure, supercomplex made of cofactors A to E. Cofactors A and D function by capturing and stabilizing tubulin in a quasi-native conformation. Cofactor E binds to the cofactor D-tubulin complex; interaction with cofactor C then causes the release of tubulin polypeptides that are committed to the native state.

Its subcellular location is the cytoplasm. Its function is as follows. Tubulin-folding protein; involved in the final step of the tubulin folding pathway. The chain is Tubulin-specific chaperone C (Tbcc) from Mus musculus (Mouse).